Reading from the N-terminus, the 668-residue chain is DNA ligase (668 aa).

NAD(+) contacts are provided by residues 34-38 (DTEYD), 83-84 (SL), and Glu114. Catalysis depends on Lys116, which acts as the N6-AMP-lysine intermediate. Residues Arg137, Glu171, Lys286, and Lys310 each contribute to the NAD(+) site. The Zn(2+) site is built by Cys404, Cys407, Cys422, and Cys427. One can recognise a BRCT domain in the interval 588–668 (NSDSIIANKS…FFDLLKSEKG (81 aa)).

This sequence belongs to the NAD-dependent DNA ligase family. LigA subfamily. The cofactor is Mg(2+). Mn(2+) is required as a cofactor.

It carries out the reaction NAD(+) + (deoxyribonucleotide)n-3'-hydroxyl + 5'-phospho-(deoxyribonucleotide)m = (deoxyribonucleotide)n+m + AMP + beta-nicotinamide D-nucleotide.. Its function is as follows. DNA ligase that catalyzes the formation of phosphodiester linkages between 5'-phosphoryl and 3'-hydroxyl groups in double-stranded DNA using NAD as a coenzyme and as the energy source for the reaction. It is essential for DNA replication and repair of damaged DNA. This is DNA ligase from Mycoplasma mycoides subsp. mycoides SC (strain CCUG 32753 / NCTC 10114 / PG1).